The following is a 261-amino-acid chain: Lys-63-specific deubiquitinase BRCC36 (261 aa).

One can recognise an MPN domain in the interval Val-6–Gln-149. The Zn(2+) site is built by His-92, His-94, and Asp-105. The JAMM motif motif lies at His-92–Asp-105.

This sequence belongs to the peptidase M67A family. BRCC36 subfamily. In terms of assembly, component of the BRCA1-A complex, at least composed of brca1, bard1, uimc1/rap80, abraxas1, brcc3/brcc36, babam2 and babam1/nba1. In the BRCA1-A complex, interacts directly with abraxas1 and babam2. Component of the BRISC complex, at least composed of abraxas2, brcc3/brcc36, babam2 and babam1/nba1. Within the complex, interacts directly with abraxas2. Both the BRCA1-A complex and the BRISC complex bind polyubiquitin. The cofactor is Zn(2+).

Its subcellular location is the nucleus. It localises to the cytoplasm. The protein resides in the cytoskeleton. It is found in the spindle pole. In terms of biological role, metalloprotease that specifically cleaves 'Lys-63'-linked polyubiquitin chains. Does not have activity toward 'Lys-48'-linked polyubiquitin chains. Component of the BRCA1-A complex, a complex that specifically recognizes 'Lys-63'-linked ubiquitinated histones H2A and H2AX at DNA lesions sites, leading to target the brca1-bard1 heterodimer to sites of DNA damage at double-strand breaks (DSBs). In the BRCA1-A complex, it specifically removes 'Lys-63'-linked ubiquitin on histones H2A and H2AX, antagonizing the rnf8-dependent ubiquitination at double-strand breaks (DSBs). Catalytic subunit of the BRISC complex, a multiprotein complex that specifically cleaves 'Lys-63'-linked ubiquitin in various substrates. Mediates the specific 'Lys-63'-specific deubiquitination associated with the COP9 signalosome complex (CSN), via the interaction of the BRISC complex with the CSN complex. The BRISC complex is required for normal mitotic spindle assembly and microtubule attachment to kinetochores via its role in deubiquitinating numa1. Plays a role in interferon signaling via its role in the deubiquitination of the interferon receptor ifnar1; deubiquitination increases ifnar1 activity by enhancing its stability and cell surface expression. Acts as a regulator of the NLRP3 inflammasome by mediating deubiquitination of nlrp3. Down-regulates the response to bacterial lipopolysaccharide (LPS) via its role in ifnar1 deubiquitination. The sequence is that of Lys-63-specific deubiquitinase BRCC36 (brcc3) from Xenopus tropicalis (Western clawed frog).